The sequence spans 194 residues: Translation machinery-associated protein 22 (194 aa).

One can recognise an SUI1 domain in the interval 102–173 (VQIKRVERNK…DVQEWLLELY (72 aa)).

It belongs to the DENR family. In terms of assembly, interacts with the 40S ribosomal subunit.

The protein localises to the cytoplasm. The protein is Translation machinery-associated protein 22 (tma22) of Neosartorya fischeri (strain ATCC 1020 / DSM 3700 / CBS 544.65 / FGSC A1164 / JCM 1740 / NRRL 181 / WB 181) (Aspergillus fischerianus).